An 82-amino-acid chain; its full sequence is MSETSSAPVRRPFHRRRKTCPFSGANAPRIDYKDVRLLQRYISERGKIVPSRITAVSQKKQRELAQAIKRARFLGLLPYVVA.

The interval 1 to 20 is disordered; sequence MSETSSAPVRRPFHRRRKTC.

This sequence belongs to the bacterial ribosomal protein bS18 family. In terms of assembly, part of the 30S ribosomal subunit. Forms a tight heterodimer with protein bS6.

Its function is as follows. Binds as a heterodimer with protein bS6 to the central domain of the 16S rRNA, where it helps stabilize the platform of the 30S subunit. The polypeptide is Small ribosomal subunit protein bS18 (Rhizobium johnstonii (strain DSM 114642 / LMG 32736 / 3841) (Rhizobium leguminosarum bv. viciae)).